A 370-amino-acid polypeptide reads, in one-letter code: Divinyl chlorophyll a/b light-harvesting protein PcbD (370 aa).

The next 6 membrane-spanning stretches (helical) occupy residues 27–47, 88–108, 140–160, 201–221, 248–268, and 315–335; these read FIAS…GSTL, VAAV…GALL, FILG…VEWA, VMGG…IHMV, AVLS…AFWA, and LVNV…WHAL.

The protein belongs to the PsbB/PsbC family. IsiA/Pcb subfamily. The antenna complex consists of divinyl chlorophylls (a and b) and divinyl chlorophyll a/b binding proteins and binds more divinyl chlorophyll b than does the antenna complex from high-light-adapted Prochlorococcus. The cofactor is divinyl chlorophyll a. Divinyl chlorophyll b serves as cofactor.

The protein resides in the cellular thylakoid membrane. In terms of biological role, the antenna complex functions as a light receptor, it captures and delivers excitation energy to photosystems II and I. The Prochlorales pcb genes are not related to higher plant LHCs. The protein is Divinyl chlorophyll a/b light-harvesting protein PcbD (pcbD) of Prochlorococcus marinus (strain NATL2A).